Here is a 593-residue protein sequence, read N- to C-terminus: NADH-quinone oxidoreductase subunit C/D (593 aa).

Residues 1–184 (MTADSVLSIP…DPYSLSAAKQ (184 aa)) form an NADH dehydrogenase I subunit C region. Residues 208–593 (DFMFLNLGPN…IDFVMADVDR (386 aa)) form an NADH dehydrogenase I subunit D region.

This sequence in the N-terminal section; belongs to the complex I 30 kDa subunit family. In the C-terminal section; belongs to the complex I 49 kDa subunit family. As to quaternary structure, NDH-1 is composed of 13 different subunits. Subunits NuoB, CD, E, F, and G constitute the peripheral sector of the complex.

The protein resides in the cell inner membrane. The catalysed reaction is a quinone + NADH + 5 H(+)(in) = a quinol + NAD(+) + 4 H(+)(out). Functionally, NDH-1 shuttles electrons from NADH, via FMN and iron-sulfur (Fe-S) centers, to quinones in the respiratory chain. The immediate electron acceptor for the enzyme in this species is believed to be ubiquinone. Couples the redox reaction to proton translocation (for every two electrons transferred, four hydrogen ions are translocated across the cytoplasmic membrane), and thus conserves the redox energy in a proton gradient. This Azotobacter vinelandii (strain DJ / ATCC BAA-1303) protein is NADH-quinone oxidoreductase subunit C/D.